A 344-amino-acid polypeptide reads, in one-letter code: Methylthioribose-1-phosphate isomerase (344 aa).

Residues 46–48 (RGA), R89, and Q196 contribute to the substrate site. D237 functions as the Proton donor in the catalytic mechanism. 247–248 (NK) lines the substrate pocket.

The protein belongs to the eIF-2B alpha/beta/delta subunits family. MtnA subfamily.

The enzyme catalyses 5-(methylsulfanyl)-alpha-D-ribose 1-phosphate = 5-(methylsulfanyl)-D-ribulose 1-phosphate. It participates in amino-acid biosynthesis; L-methionine biosynthesis via salvage pathway; L-methionine from S-methyl-5-thio-alpha-D-ribose 1-phosphate: step 1/6. Catalyzes the interconversion of methylthioribose-1-phosphate (MTR-1-P) into methylthioribulose-1-phosphate (MTRu-1-P). The chain is Methylthioribose-1-phosphate isomerase from Syntrophotalea carbinolica (strain DSM 2380 / NBRC 103641 / GraBd1) (Pelobacter carbinolicus).